Consider the following 260-residue polypeptide: Uroplakin-1b (260 aa).

Topologically, residues 1-15 are cytoplasmic; sequence MAKDDSTVRCFQGLL. A helical membrane pass occupies residues 16 to 36; it reads IFGHVIVGMCGIALTAECIFF. Residues 37–59 lie on the Extracellular side of the membrane; it reads VSDQHSLYPLLEATNNDDIFGAA. The chain crosses the membrane as a helical span at residues 60 to 80; it reads WIGMFVGICLFCLSVLAIVGI. Residues 81–86 lie on the Cytoplasmic side of the membrane; that stretch reads MKSNRK. Residues 87 to 107 form a helical membrane-spanning segment; sequence ILLAYFIMMFIVYGFEVASCI. Over 108 to 229 the chain is Extracellular; sequence TAATQRDFFT…ELISGPMDRH (122 aa). The chain crosses the membrane as a helical span at residues 230–250; it reads AWGVAWFGFAILCWTFWVLLG. At 251 to 260 the chain is on the cytoplasmic side; that stretch reads TMFYWSRIEY.

This sequence belongs to the tetraspanin (TM4SF) family. Heterodimer with uroplakin-3A (UPK3A) or uroplakin-3B (UPK3B). In terms of processing, N-glycosylated with high-mannose oligosaccharides. Bladder epithelium.

It localises to the membrane. Functionally, component of the asymmetric unit membrane (AUM); a highly specialized biomembrane elaborated by terminally differentiated urothelial cells. May play an important role in normal bladder epithelial physiology, possibly in regulating membrane permeability of superficial umbrella cells or in stabilizing the apical membrane through AUM/cytoskeletal interactions. The sequence is that of Uroplakin-1b (Upk1b) from Mus musculus (Mouse).